A 546-amino-acid chain; its full sequence is Chaperonin GroEL (546 aa).

ATP is bound by residues 30 to 33 (TLGP), K51, 87 to 91 (DGTTT), G415, 479 to 481 (NAA), and D495. The disordered stretch occupies residues 526-546 (KKGDSAPAGGGMGDMGGMGMM). Over residues 533–546 (AGGGMGDMGGMGMM) the composition is skewed to gly residues.

Belongs to the chaperonin (HSP60) family. As to quaternary structure, forms a cylinder of 14 subunits composed of two heptameric rings stacked back-to-back. Interacts with the co-chaperonin GroES.

The protein resides in the cytoplasm. It catalyses the reaction ATP + H2O + a folded polypeptide = ADP + phosphate + an unfolded polypeptide.. In terms of biological role, together with its co-chaperonin GroES, plays an essential role in assisting protein folding. The GroEL-GroES system forms a nano-cage that allows encapsulation of the non-native substrate proteins and provides a physical environment optimized to promote and accelerate protein folding. The sequence is that of Chaperonin GroEL from Thioalkalivibrio sulfidiphilus (strain HL-EbGR7).